The chain runs to 100 residues: Cell division topological specificity factor (100 aa).

The protein belongs to the MinE family.

Functionally, prevents the cell division inhibition by proteins MinC and MinD at internal division sites while permitting inhibition at polar sites. This ensures cell division at the proper site by restricting the formation of a division septum at the midpoint of the long axis of the cell. The chain is Cell division topological specificity factor from Blochmanniella floridana.